A 429-amino-acid polypeptide reads, in one-letter code: Metacaspase-1A (429 aa).

The interval 1–68 (MQHHHQGSYG…PQHNGGQMYG (68 aa)) is disordered. The segment covering 8–19 (SYGGGGGGGGYP) has biased composition (gly residues). The span at 20-45 (GQAYREQNPYGYGQQSPQQGYGAPQQ) shows a compositional bias: low complexity. The span at 46-62 (HNGYNQPPSGYGQPQHN) shows a compositional bias: polar residues. Residues His-220 and Cys-276 contribute to the active site.

The protein belongs to the peptidase C14B family.

Involved in cell death (apoptosis). This Aspergillus clavatus (strain ATCC 1007 / CBS 513.65 / DSM 816 / NCTC 3887 / NRRL 1 / QM 1276 / 107) protein is Metacaspase-1A (casA).